Here is a 556-residue protein sequence, read N- to C-terminus: Formate--tetrahydrofolate ligase (556 aa).

An ATP-binding site is contributed by 65–72 (TPAGEGKS).

The protein belongs to the formate--tetrahydrofolate ligase family.

It carries out the reaction (6S)-5,6,7,8-tetrahydrofolate + formate + ATP = (6R)-10-formyltetrahydrofolate + ADP + phosphate. The protein operates within one-carbon metabolism; tetrahydrofolate interconversion. This is Formate--tetrahydrofolate ligase from Streptococcus pneumoniae (strain ATCC 700669 / Spain 23F-1).